The following is a 638-amino-acid chain: Chaperone protein DnaK (638 aa).

Residue Thr198 is modified to Phosphothreonine; by autocatalysis. Low complexity predominate over residues 603–618 (QQAQAQQAQGADADAQ). The interval 603–638 (QQAQAQQAQGADADAQQSKEDDVVDAEFEEVKDDKK) is disordered. The segment covering 624–638 (DVVDAEFEEVKDDKK) has biased composition (acidic residues).

It belongs to the heat shock protein 70 family.

Its function is as follows. Acts as a chaperone. The polypeptide is Chaperone protein DnaK (Vibrio campbellii (strain ATCC BAA-1116)).